The chain runs to 348 residues: PDZ and LIM domain protein 2 (348 aa).

Residues 1–84 form the PDZ domain; it reads MALTVDVVGP…PLRLQLDRPQ (84 aa). A disordered region spans residues 67-139; that stretch reads SKIRQSPSPL…PPTSPQAPTG (73 aa). Over residues 103–118 the composition is skewed to polar residues; the sequence is RFQSSRRTHTDSQASL. Ser117, Ser119, and Ser124 each carry phosphoserine. Residues Thr128 and Thr132 each carry the phosphothreonine modification. Residues Ser133, Ser153, Ser191, Ser197, Ser198, Ser202, Ser209, and Ser262 each carry the phosphoserine modification. A disordered region spans residues 165 to 202; it reads GGRRGSRQASLSPAGDSAVLVLPPPPSPGARSSSSRLS. The span at 193-202 shows a compositional bias: low complexity; the sequence is GARSSSSRLS. The interval 249 to 275 is disordered; sequence ERGGTPAYLPSSLSPQSSLPTSRALAS. Residues 257 to 270 are compositionally biased toward low complexity; it reads LPSSLSPQSSLPTS. An LIM zinc-binding domain is found at 280 to 340; sequence HTCEKCNTSI…EKHARQRYSA (61 aa).

In terms of assembly, interacts with alpha-actinins ACTN1 and ACTN4, FLNA and MYH9. Interacts (via LIM zinc-binding domain) with MKRN2.

The protein localises to the cytoplasm. The protein resides in the cytoskeleton. In terms of biological role, probable adapter protein located at the actin cytoskeleton that promotes cell attachment. Necessary for the migratory capacity of epithelial cells. Overexpression enhances cell adhesion to collagen and fibronectin and suppresses anchorage independent growth. May contribute to tumor cell migratory capacity. This chain is PDZ and LIM domain protein 2 (PDLIM2), found in Bos taurus (Bovine).